Consider the following 116-residue polypeptide: T cell receptor alpha variable 38-1 (116 aa).

Residues 1 to 21 (MTRVSLLWAVVVSTCLESGMA) form the signal peptide. Residues 22–116 (QTVTQSQPEM…TAMYFCAFMK (95 aa)) enclose the Ig-like domain. A disulfide bridge links C43 with C112. N78 carries N-linked (GlcNAc...) asparagine glycosylation.

As to quaternary structure, alpha-beta TR is a heterodimer composed of an alpha and beta chain; disulfide-linked. The alpha-beta TR is associated with the transmembrane signaling CD3 coreceptor proteins to form the TR-CD3 (TcR or TCR). The assembly of alpha-beta TR heterodimers with CD3 occurs in the endoplasmic reticulum where a single alpha-beta TR heterodimer associates with one CD3D-CD3E heterodimer, one CD3G-CD3E heterodimer and one CD247 homodimer forming a stable octameric structure. CD3D-CD3E and CD3G-CD3E heterodimers preferentially associate with TR alpha and TR beta chains, respectively. The association of the CD247 homodimer is the last step of TcR assembly in the endoplasmic reticulum and is required for transport to the cell surface.

The protein localises to the cell membrane. Its function is as follows. V region of the variable domain of T cell receptor (TR) alpha chain that participates in the antigen recognition. Alpha-beta T cell receptors are antigen specific receptors which are essential to the immune response and are present on the cell surface of T lymphocytes. Recognize peptide-major histocompatibility (MH) (pMH) complexes that are displayed by antigen presenting cells (APC), a prerequisite for efficient T cell adaptive immunity against pathogens. Binding of alpha-beta TR to pMH complex initiates TR-CD3 clustering on the cell surface and intracellular activation of LCK that phosphorylates the ITAM motifs of CD3G, CD3D, CD3E and CD247 enabling the recruitment of ZAP70. In turn ZAP70 phosphorylates LAT, which recruits numerous signaling molecules to form the LAT signalosome. The LAT signalosome propagates signal branching to three major signaling pathways, the calcium, the mitogen-activated protein kinase (MAPK) kinase and the nuclear factor NF-kappa-B (NF-kB) pathways, leading to the mobilization of transcription factors that are critical for gene expression and essential for T cell growth and differentiation. The T cell repertoire is generated in the thymus, by V-(D)-J rearrangement. This repertoire is then shaped by intrathymic selection events to generate a peripheral T cell pool of self-MH restricted, non-autoaggressive T cells. Post-thymic interaction of alpha-beta TR with the pMH complexes shapes TR structural and functional avidity. This is T cell receptor alpha variable 38-1 from Homo sapiens (Human).